We begin with the raw amino-acid sequence, 118 residues long: Large ribosomal subunit protein bL19 (118 aa).

It belongs to the bacterial ribosomal protein bL19 family.

Functionally, this protein is located at the 30S-50S ribosomal subunit interface and may play a role in the structure and function of the aminoacyl-tRNA binding site. This is Large ribosomal subunit protein bL19 from Campylobacter concisus (strain 13826).